We begin with the raw amino-acid sequence, 701 residues long: Polyribonucleotide nucleotidyltransferase (701 aa).

Asp485 and Asp491 together coordinate Mg(2+). In terms of domain architecture, KH spans 552-611 (PKTQIMSINPDKIRDVIGAGGKVINKIIQDTGVKIDIKEDGTVFVSSTDHNGVNEAIKII). The S1 motif domain maps to 621–689 (GEVYLGKVTK…NQGRINLSRK (69 aa)).

This sequence belongs to the polyribonucleotide nucleotidyltransferase family. Requires Mg(2+) as cofactor.

Its subcellular location is the cytoplasm. The enzyme catalyses RNA(n+1) + phosphate = RNA(n) + a ribonucleoside 5'-diphosphate. Involved in mRNA degradation. Catalyzes the phosphorolysis of single-stranded polyribonucleotides processively in the 3'- to 5'-direction. The sequence is that of Polyribonucleotide nucleotidyltransferase from Clostridium beijerinckii (strain ATCC 51743 / NCIMB 8052) (Clostridium acetobutylicum).